A 631-amino-acid chain; its full sequence is Biotin--protein ligase (631 aa).

One can recognise a BPL/LPL catalytic domain in the interval 341 to 553; that stretch reads ELYAKLINGC…QFDRYHRLLL (213 aa).

It belongs to the biotin--protein ligase family. As to quaternary structure, monomer.

It localises to the cytoplasm. The catalysed reaction is apo-[methylmalonyl-CoA:pyruvate carboxytransferase] + biotin + ATP = holo-[methylmalonyl-CoA:pyruvate carboxytransferase] + AMP + diphosphate + H(+). It catalyses the reaction apo-[propionyl-CoA:carbon-dioxide ligase (ADP-forming)] + biotin + ATP = holo-[propionyl-CoA:carbon-dioxide ligase (ADP-forming)] + AMP + diphosphate + H(+). The enzyme catalyses apo-[3-methylcrotonoyl-CoA:carbon-dioxide ligase (ADP-forming)] + biotin + ATP = holo-[3-methylcrotonoyl-CoA:carbon-dioxide ligase (ADP-forming)] + AMP + diphosphate + H(+). It carries out the reaction biotin + L-lysyl-[protein] + ATP = N(6)-biotinyl-L-lysyl-[protein] + AMP + diphosphate + H(+). Post-translational modification of specific protein by attachment of biotin. Acts on various carboxylases such as acetyl-CoA-carboxylase, pyruvate carboxylase, propionyl CoA carboxylase, and 3-methylcrotonyl CoA carboxylase. This chain is Biotin--protein ligase (bpl1), found in Schizosaccharomyces pombe (strain 972 / ATCC 24843) (Fission yeast).